A 337-amino-acid polypeptide reads, in one-letter code: Protein RecA (337 aa).

66–73 serves as a coordination point for ATP; that stretch reads GPESSGKT.

It belongs to the RecA family.

It localises to the cytoplasm. Its function is as follows. Can catalyze the hydrolysis of ATP in the presence of single-stranded DNA, the ATP-dependent uptake of single-stranded DNA by duplex DNA, and the ATP-dependent hybridization of homologous single-stranded DNAs. It interacts with LexA causing its activation and leading to its autocatalytic cleavage. The protein is Protein RecA of Mesomycoplasma hyopneumoniae (strain J / ATCC 25934 / NCTC 10110) (Mycoplasma hyopneumoniae).